The primary structure comprises 236 residues: Large ribosomal subunit protein uL3 (236 aa).

The segment at 215–236 (PAPEPAAPVAAAAAGTGEEASA) is disordered. Positions 221–236 (APVAAAAAGTGEEASA) are enriched in low complexity.

This sequence belongs to the universal ribosomal protein uL3 family. In terms of assembly, part of the 50S ribosomal subunit. Forms a cluster with proteins L14 and L19.

One of the primary rRNA binding proteins, it binds directly near the 3'-end of the 23S rRNA, where it nucleates assembly of the 50S subunit. The polypeptide is Large ribosomal subunit protein uL3 (Parafrankia sp. (strain EAN1pec)).